Consider the following 713-residue polypeptide: B3 domain-containing transcription factor VAL3 (713 aa).

The segment at residues 328 to 427 (FEKILSATDT…KLILGFRKAS (100 aa)) is a DNA-binding region (TF-B3). 2 disordered regions span residues 459 to 478 (VECSSGKKKSSMMITRSKRQ) and 616 to 713 (LNSD…TSSM). Over residues 464 to 477 (GKKKSSMMITRSKR) the composition is skewed to basic residues. A compositionally biased stretch (polar residues) spans 616 to 629 (LNSDNGLHQSANNS). Residues 663 to 674 (TKSETLPHDDTV) show a composition bias toward basic and acidic residues. Residues 676–688 (SSFTSPSSSSAHS) show a composition bias toward low complexity. Positions 690 to 700 (NNKEDEGKLKT) are enriched in basic and acidic residues. The span at 701–713 (TTEIADTTTTSSM) shows a compositional bias: low complexity.

It localises to the nucleus. Its function is as follows. May be involved in plant development. This is B3 domain-containing transcription factor VAL3 (VAL3) from Arabidopsis thaliana (Mouse-ear cress).